A 249-amino-acid polypeptide reads, in one-letter code: dTDP-4-amino-2,3,4,6-tetradeoxy-D-glucose N,N-dimethyltransferase (249 aa).

Residue R30 participates in substrate binding. S-adenosyl-L-methionine contacts are provided by residues A59, E80, and 102–103 (DI). Substrate-binding positions include T165, 178-182 (RLSHS), and R241.

Belongs to the methyltransferase TylM1/DesVI family. In terms of assembly, homodimer. Requires Mg(2+) as cofactor.

It carries out the reaction dTDP-4-amino-2,3,4,6-tetradeoxy-alpha-D-erythro-hexopyranose + 2 S-adenosyl-L-methionine = dTDP-alpha-D-forosamine + 2 S-adenosyl-L-homocysteine + 2 H(+). Involved in the biosynthesis of forosamine ((4-dimethylamino)-2,3,4,6-tetradeoxy-alpha-D-threo-hexopyranose), a highly deoxygenated sugar component of several bioactive natural products such as the insecticidal spinosyns A and D. Catalyzes the dimethylation of the C-4 amino group from dTDP-4-amino-2,3,4,6-tetradeoxy-alpha-D-glucose to yield dTDP-D-forosamine. The polypeptide is dTDP-4-amino-2,3,4,6-tetradeoxy-D-glucose N,N-dimethyltransferase (Saccharopolyspora spinosa).